Reading from the N-terminus, the 188-residue chain is Probable nicotinate-nucleotide adenylyltransferase (188 aa).

The protein belongs to the NadD family.

It catalyses the reaction nicotinate beta-D-ribonucleotide + ATP + H(+) = deamido-NAD(+) + diphosphate. It participates in cofactor biosynthesis; NAD(+) biosynthesis; deamido-NAD(+) from nicotinate D-ribonucleotide: step 1/1. Its function is as follows. Catalyzes the reversible adenylation of nicotinate mononucleotide (NaMN) to nicotinic acid adenine dinucleotide (NaAD). This Listeria welshimeri serovar 6b (strain ATCC 35897 / DSM 20650 / CCUG 15529 / CIP 8149 / NCTC 11857 / SLCC 5334 / V8) protein is Probable nicotinate-nucleotide adenylyltransferase.